Reading from the N-terminus, the 294-residue chain is 3-methyl-2-oxobutanoate hydroxymethyltransferase (294 aa).

Residues M1–P12 show a composition bias toward polar residues. Positions M1–A21 are disordered. Mg(2+)-binding residues include D69 and D112. 3-methyl-2-oxobutanoate is bound by residues D69 to S70, D112, and K141. E143 contributes to the Mg(2+) binding site. Catalysis depends on E210, which acts as the Proton acceptor.

The protein belongs to the PanB family. Homodecamer; pentamer of dimers. Mg(2+) serves as cofactor.

It localises to the cytoplasm. It carries out the reaction 3-methyl-2-oxobutanoate + (6R)-5,10-methylene-5,6,7,8-tetrahydrofolate + H2O = 2-dehydropantoate + (6S)-5,6,7,8-tetrahydrofolate. Its pathway is cofactor biosynthesis; (R)-pantothenate biosynthesis; (R)-pantoate from 3-methyl-2-oxobutanoate: step 1/2. Functionally, catalyzes the reversible reaction in which hydroxymethyl group from 5,10-methylenetetrahydrofolate is transferred onto alpha-ketoisovalerate to form ketopantoate. The polypeptide is 3-methyl-2-oxobutanoate hydroxymethyltransferase (Albidiferax ferrireducens (strain ATCC BAA-621 / DSM 15236 / T118) (Rhodoferax ferrireducens)).